The sequence spans 274 residues: Transmembrane protein 106B (274 aa).

Over residues 1–11 (MGKSLSHLPLH) the composition is skewed to low complexity. The segment at 1–20 (MGKSLSHLPLHSSKEDAYDG) is disordered. The N-myristoyl glycine moiety is linked to residue Gly2. At 2–96 (GKSLSHLPLH…QRLRPRRTKL (95 aa)) the chain is on the cytoplasmic side. Residue Ser33 is modified to Phosphoserine. Residues 97–117 (YVMASVFVCLLLSGLAVFFLF) traverse the membrane as a helical segment. Topologically, residues 118–274 (PRSIDVKYIG…EYLNVLQPQQ (157 aa)) are lumenal. Asn145, Asn151, Asn164, and Asn183 each carry an N-linked (GlcNAc...) asparagine glycan. Cys214 and Cys253 are disulfide-bonded. An N-linked (GlcNAc...) asparagine glycan is attached at Asn256.

This sequence belongs to the TMEM106 family. As to quaternary structure, can form homomers. Interacts (via N-terminus) with MAP6 (via C-terminus). Interacts (via C-terminus) with the vacuolar-type ATPase subunit ATP6AP1. Interacts (via N-terminus) with AP2M1 and CLTC. Interacts with TMEM106C. In terms of assembly, (Microbial infection) Interacts with SARS coronavirus-2/SARS-CoV-2 spike protein (via RBD domain). As to expression, expressed in the brain, including in the frontal cortex (at protein level). Expressed in lung epithelial cells.

It is found in the late endosome membrane. Its subcellular location is the lysosome membrane. It localises to the cell membrane. In terms of biological role, in neurons, involved in the transport of late endosomes/lysosomes. May be involved in dendrite morphogenesis and maintenance by regulating lysosomal trafficking. May act as a molecular brake for retrograde transport of late endosomes/lysosomes, possibly via its interaction with MAP6. In motoneurons, may mediate the axonal transport of lysosomes and axonal sorting at the initial segment. It remains unclear whether TMEM106B affects the transport of moving lysosomes in the anterograde or retrograde direction in neurites and whether it is important in the sorting of lysosomes in axons or in dendrites. In neurons, may also play a role in the regulation of lysosomal size and responsiveness to stress. Required for proper lysosomal acidification. Its function is as follows. (Microbial infection) Plays a role in human coronavirus SARS-CoV-2 infection, but not in common cold coronaviruses HCoV-229E and HCoV-OC43 infections. Involved in ACE2-independent SARS-CoV-2 cell entry. Required for post-endocytic stage of virus entry, facilitates spike-mediated membrane fusion. Virus attachment and endocytosis can also be mediated by other cell surface receptors. This Homo sapiens (Human) protein is Transmembrane protein 106B.